Reading from the N-terminus, the 914-residue chain is Probable dipeptidyl-aminopeptidase B (914 aa).

Over residues 1–10 (MGKSEADEDA) the composition is skewed to acidic residues. A disordered region spans residues 1–81 (MGKSEADEDA…DQPFLPSRKG (81 aa)). The Cytoplasmic portion of the chain corresponds to 1 to 89 (MGKSEADEDA…KGSGARARRV (89 aa)). The segment covering 20–34 (SSSAASQTSSDSGLS) has biased composition (low complexity). A helical; Signal-anchor for type II membrane protein membrane pass occupies residues 90–110 (FWGLLLLCLAGWVLAFVLFLI). At 111 to 914 (QGRSGYSATS…FKRALPVFVH (804 aa)) the chain is on the vacuolar side. 2 N-linked (GlcNAc...) asparagine glycosylation sites follow: N347 and N638. S752 serves as the catalytic Charge relay system. N806 is a glycosylation site (N-linked (GlcNAc...) asparagine). Residues D829 and H862 each act as charge relay system in the active site.

The protein belongs to the peptidase S9B family.

The protein resides in the vacuole membrane. It catalyses the reaction Release of an N-terminal dipeptide, Xaa-Yaa-|-Zaa-, from a polypeptide, preferentially when Yaa is Pro, provided Zaa is neither Pro nor hydroxyproline.. Functionally, type IV dipeptidyl-peptidase which removes N-terminal dipeptides sequentially from polypeptides having unsubstituted N-termini provided that the penultimate residue is proline. The polypeptide is Probable dipeptidyl-aminopeptidase B (dapB) (Aspergillus terreus (strain NIH 2624 / FGSC A1156)).